The following is an 88-amino-acid chain: Large ribosomal subunit protein bL27 (88 aa).

Residues 1–21 are disordered; it reads MAHKKGASSSRNGRDSAAHRL.

It belongs to the bacterial ribosomal protein bL27 family.

The chain is Large ribosomal subunit protein bL27 from Mycobacterium ulcerans (strain Agy99).